A 146-amino-acid chain; its full sequence is Large ribosomal subunit protein uL13 (146 aa).

The protein belongs to the universal ribosomal protein uL13 family. In terms of assembly, part of the 50S ribosomal subunit.

In terms of biological role, this protein is one of the early assembly proteins of the 50S ribosomal subunit, although it is not seen to bind rRNA by itself. It is important during the early stages of 50S assembly. This Methylobacillus flagellatus (strain ATCC 51484 / DSM 6875 / VKM B-1610 / KT) protein is Large ribosomal subunit protein uL13.